The sequence spans 216 residues: Co-chaperone protein SBA1 (216 aa).

An N-acetylserine modification is found at S2. A CS domain is found at V5–T108. 2 repeats span residues A141–A156 and G160–A174. The tract at residues G169–A216 is disordered. Residues E200–A216 show a composition bias toward acidic residues.

Belongs to the p23/wos2 family. Interacts with HSP82.

Functionally, acts as a co-chaperone. This Saccharomyces cerevisiae (strain ATCC 204508 / S288c) (Baker's yeast) protein is Co-chaperone protein SBA1 (SBA1).